The primary structure comprises 326 residues: Protein ORF5 in retron Ec67 (326 aa).

Positions 1-24 (MGKSKKNRAAATNQLKHKSQTSAE) are disordered. Residues 10 to 24 (AATNQLKHKSQTSAE) show a composition bias toward polar residues.

This sequence belongs to the phage portal family. PBSX subfamily.

In Escherichia coli, this protein is Protein ORF5 in retron Ec67.